Here is a 220-residue protein sequence, read N- to C-terminus: Redox-sensing transcriptional repressor Rex (220 aa).

The segment at residues 17 to 56 (LYARSLRYLLQEGVESVSSQELGDRINVTAAQIRKDLSYF) is a DNA-binding region (H-T-H motif). 91–96 (GIGHLG) contributes to the NAD(+) binding site.

It belongs to the transcriptional regulatory Rex family. Homodimer.

It localises to the cytoplasm. In terms of biological role, modulates transcription in response to changes in cellular NADH/NAD(+) redox state. This chain is Redox-sensing transcriptional repressor Rex, found in Roseiflexus sp. (strain RS-1).